The primary structure comprises 140 residues: Mite allergen Der p 21.0101 (140 aa).

Residues 1–19 (MKFIITLFAAIVMAAAVSG) form the signal peptide. Immunodominant conformational IgE-binding epitope stretches follow at residues 20 to 53 (FIVG…EKGL) and 108 to 140 (YNYE…DEYY).

The protein belongs to the mite group 5 allergen family. Monomer. Homodimer. In terms of tissue distribution, expressed in the epithelium, lumen and microvilli of the midgut, and in feces.

Its subcellular location is the cytoplasm. The protein resides in the endoplasmic reticulum. The protein localises to the vesicle. It localises to the secreted. The chain is Mite allergen Der p 21.0101 from Dermatophagoides pteronyssinus (European house dust mite).